The chain runs to 476 residues: ATP synthase subunit beta (476 aa).

Residue 154–161 participates in ATP binding; the sequence is GGAGVGKT.

The protein belongs to the ATPase alpha/beta chains family. As to quaternary structure, F-type ATPases have 2 components, CF(1) - the catalytic core - and CF(0) - the membrane proton channel. CF(1) has five subunits: alpha(3), beta(3), gamma(1), delta(1), epsilon(1). CF(0) has three main subunits: a(1), b(2) and c(9-12). The alpha and beta chains form an alternating ring which encloses part of the gamma chain. CF(1) is attached to CF(0) by a central stalk formed by the gamma and epsilon chains, while a peripheral stalk is formed by the delta and b chains.

It localises to the cell inner membrane. It catalyses the reaction ATP + H2O + 4 H(+)(in) = ADP + phosphate + 5 H(+)(out). Produces ATP from ADP in the presence of a proton gradient across the membrane. The catalytic sites are hosted primarily by the beta subunits. This is ATP synthase subunit beta from Nitrobacter hamburgensis (strain DSM 10229 / NCIMB 13809 / X14).